A 230-amino-acid polypeptide reads, in one-letter code: Flagellar L-ring protein (230 aa).

Residues 1 to 16 form the signal peptide; that stretch reads MYLVFGIIFTSVIVTS. The N-palmitoyl cysteine moiety is linked to residue Cys-17. Cys-17 carries S-diacylglycerol cysteine lipidation.

The protein belongs to the FlgH family. As to quaternary structure, the basal body constitutes a major portion of the flagellar organelle and consists of four rings (L,P,S, and M) mounted on a central rod.

The protein localises to the cell outer membrane. Its subcellular location is the bacterial flagellum basal body. Functionally, assembles around the rod to form the L-ring and probably protects the motor/basal body from shearing forces during rotation. The sequence is that of Flagellar L-ring protein from Bartonella bacilliformis (strain ATCC 35685 / KC583 / Herrer 020/F12,63).